Here is a 195-residue protein sequence, read N- to C-terminus: Phosphoheptose isomerase (195 aa).

The region spanning 36 to 195 (LAHCLLSDGK…DLVDHQLFGE (160 aa)) is the SIS domain. 51–53 (NGG) serves as a coordination point for substrate. Zn(2+)-binding residues include histidine 60 and glutamate 64. Substrate is bound by residues glutamate 64, 93–94 (ND), 119–121 (STS), serine 124, and glutamine 174. 2 residues coordinate Zn(2+): glutamine 174 and histidine 182.

It belongs to the SIS family. GmhA subfamily. In terms of assembly, homotetramer. The cofactor is Zn(2+).

It is found in the cytoplasm. It catalyses the reaction 2 D-sedoheptulose 7-phosphate = D-glycero-alpha-D-manno-heptose 7-phosphate + D-glycero-beta-D-manno-heptose 7-phosphate. It functions in the pathway carbohydrate biosynthesis; D-glycero-D-manno-heptose 7-phosphate biosynthesis; D-glycero-alpha-D-manno-heptose 7-phosphate and D-glycero-beta-D-manno-heptose 7-phosphate from sedoheptulose 7-phosphate: step 1/1. Catalyzes the isomerization of sedoheptulose 7-phosphate in D-glycero-D-manno-heptose 7-phosphate. The sequence is that of Phosphoheptose isomerase from Methylococcus capsulatus (strain ATCC 33009 / NCIMB 11132 / Bath).